We begin with the raw amino-acid sequence, 643 residues long: Threonine--tRNA ligase (643 aa).

The TGS domain occupies 1 to 61 (MPIITLPDGS…TEDSKLEIIT (61 aa)). Positions 243-534 (DHRKIGKALD…ITEEYAGFFP (292 aa)) are catalytic. Cys-334, His-385, and His-511 together coordinate Zn(2+).

It belongs to the class-II aminoacyl-tRNA synthetase family. As to quaternary structure, homodimer. Zn(2+) is required as a cofactor.

The protein resides in the cytoplasm. It carries out the reaction tRNA(Thr) + L-threonine + ATP = L-threonyl-tRNA(Thr) + AMP + diphosphate + H(+). In terms of biological role, catalyzes the attachment of threonine to tRNA(Thr) in a two-step reaction: L-threonine is first activated by ATP to form Thr-AMP and then transferred to the acceptor end of tRNA(Thr). Also edits incorrectly charged L-seryl-tRNA(Thr). The polypeptide is Threonine--tRNA ligase (Pasteurella multocida (strain Pm70)).